A 127-amino-acid chain; its full sequence is Fumarate reductase subunit C (127 aa).

Transmembrane regions (helical) follow at residues 30–50 (ATVL…GCLV), 58–78 (GWLA…ALLG), and 107–127 (IIVL…LIVV).

It belongs to the FrdC family. As to quaternary structure, part of an enzyme complex containing four subunits: a flavoprotein (FrdA), an iron-sulfur protein (FrdB), and two hydrophobic anchor proteins (FrdC and FrdD).

Its subcellular location is the cell inner membrane. Its function is as follows. Anchors the catalytic components of the fumarate reductase complex to the cell membrane, binds quinones. This is Fumarate reductase subunit C from Vibrio parahaemolyticus serotype O3:K6 (strain RIMD 2210633).